We begin with the raw amino-acid sequence, 425 residues long: Serine--tRNA ligase (425 aa).

An L-serine-binding site is contributed by 228–230; sequence TAE. 259–261 is a binding site for ATP; it reads RSE. Glu-282 serves as a coordination point for L-serine. 346 to 349 contributes to the ATP binding site; sequence EIAS. Ser-382 is an L-serine binding site.

It belongs to the class-II aminoacyl-tRNA synthetase family. Type-1 seryl-tRNA synthetase subfamily. As to quaternary structure, homodimer. The tRNA molecule binds across the dimer.

Its subcellular location is the cytoplasm. It catalyses the reaction tRNA(Ser) + L-serine + ATP = L-seryl-tRNA(Ser) + AMP + diphosphate + H(+). The enzyme catalyses tRNA(Sec) + L-serine + ATP = L-seryl-tRNA(Sec) + AMP + diphosphate + H(+). It functions in the pathway aminoacyl-tRNA biosynthesis; selenocysteinyl-tRNA(Sec) biosynthesis; L-seryl-tRNA(Sec) from L-serine and tRNA(Sec): step 1/1. In terms of biological role, catalyzes the attachment of serine to tRNA(Ser). Is also able to aminoacylate tRNA(Sec) with serine, to form the misacylated tRNA L-seryl-tRNA(Sec), which will be further converted into selenocysteinyl-tRNA(Sec). This is Serine--tRNA ligase from Rickettsia akari (strain Hartford).